A 649-amino-acid polypeptide reads, in one-letter code: Probable cyclic nucleotide-gated ion channel 12 (649 aa).

The Cytoplasmic portion of the chain corresponds to 1 to 43 (MNHRRSKFARIDSMGVDGKLKSVRGRLKKVYGKMKTLENWRKT). A helical membrane pass occupies residues 44-64 (VLLACVVALAIDPLFLFIPLI). Over 65–76 (DSQRFCFTFDKT) the chain is Extracellular. The helical transmembrane segment at 77 to 97 (LVAVVCVIRTFIDTFYVIHII) threads the bilayer. The Cytoplasmic portion of the chain corresponds to 98–128 (YYLITETIAPRSQASLRGEIVVHSKATLKTR). A helical membrane pass occupies residues 129–149 (LLFHFIVDIISVLPIPQVVVL). At 150 to 162 (TLIPLSASLVSER) the chain is on the extracellular side. Residues 163 to 183 (ILKWIILSQYVPRIIRMYPLY) form a helical membrane-spanning segment. At 184–200 (KEVTRAFGTVAESKWAG) the chain is on the cytoplasmic side. The helical transmembrane segment at 201–221 (AALNLFLYMLHSYVFGAFWYL) threads the bilayer. Topologically, residues 222–329 (SSIERKSKCW…QNLETSNSAG (108 aa)) are extracellular. Residues 330 to 350 (EIFFAIIICVSGLLLFAVLIG) form a helical membrane-spanning segment. The Cytoplasmic segment spans residues 351–649 (NVQKYLQSST…ADLEFAKAEA (299 aa)). A nucleoside 3',5'-cyclic phosphate contacts are provided by residues 436–559 (LNIM…TFRL) and glutamate 507. Residues 545-560 (LNVFQRQKLQRTFRLY) are calmodulin-binding. In terms of domain architecture, IQ spans 565 to 594 (RSWAAFFIQAAWRKHCKRKLSKTRDNENIP). Residues 618–649 (RRKDTADCSSSPDMSPPVPHKPADLEFAKAEA) are disordered. Positions 638 to 649 (KPADLEFAKAEA) are enriched in basic and acidic residues.

The protein belongs to the cyclic nucleotide-gated cation channel (TC 1.A.1.5) family. Homotetramer or heterotetramer.

Its subcellular location is the cell membrane. Functionally, probable cyclic nucleotide-gated ion channel. This chain is Probable cyclic nucleotide-gated ion channel 12 (CNGC12), found in Arabidopsis thaliana (Mouse-ear cress).